Consider the following 640-residue polypeptide: Rab proteins geranylgeranyltransferase component A (640 aa).

Disordered stretches follow at residues D414 to N439 and H594 to L640. Residues N419–N439 show a composition bias toward low complexity. Over residues I604 to D624 the composition is skewed to acidic residues.

The protein belongs to the Rab GDI family.

Its function is as follows. Substrate-binding subunit (component A) of the Rab geranylgeranyltransferase (GGTase) complex. Binds unprenylated Rab proteins and presents the substrate peptide to the catalytic component B. The component A is thought to be regenerated by transferring its prenylated Rab back to the donor membrane. This chain is Rab proteins geranylgeranyltransferase component A (MRS6), found in Candida albicans (Yeast).